The sequence spans 262 residues: Matrilysin (262 aa).

Positions 1-12 are cleaved as a signal peptide; sequence LCVLCLLPQSPA. A propeptide spans 13–89 (activation peptide); that stretch reads LPLPREAGGH…PRCGLPDTGE (77 aa). A Cysteine switch motif is present at residues 80–87; it reads PRCGLPDT. Cys82 lines the Zn(2+) pocket. Asp148 serves as a coordination point for Ca(2+). Zn(2+) contacts are provided by His158 and Asp160. The Ca(2+) site is built by Asp165, Gly166, Gly168, and Thr170. His173 provides a ligand contact to Zn(2+). Ca(2+) is bound by residues Gly180, Gly182, and Asp184. His186 is a binding site for Zn(2+). Ca(2+) is bound by residues Asp188 and Glu191. His209 provides a ligand contact to Zn(2+). Glu210 is a catalytic residue. The Zn(2+) site is built by His213 and His219.

Belongs to the peptidase M10A family. The cofactor is Ca(2+). Zn(2+) is required as a cofactor.

Its subcellular location is the secreted. The protein resides in the extracellular space. The protein localises to the extracellular matrix. The catalysed reaction is Cleavage of 14-Ala-|-Leu-15 and 16-Tyr-|-Leu-17 in B chain of insulin. No action on collagen types I, II, IV, V. Cleaves gelatin chain alpha2(I) &gt; alpha1(I).. Its function is as follows. Degrades casein, gelatins of types I, III, IV, and V, and fibronectin. Activates procollagenase. This Felis catus (Cat) protein is Matrilysin (MMP7).